Consider the following 261-residue polypeptide: Uridine-cytidine kinase 2 (261 aa).

Over residues 1 to 16 (MAGDSEQTLQNHQQPN) the composition is skewed to polar residues. The interval 1 to 24 (MAGDSEQTLQNHQQPNGGEPFLIG) is disordered. N-acetylalanine is present on A2. Residue 27–35 (GGTASGKSS) participates in ATP binding. Residues D84, Y112, H117, R166, R176, and Q184 each contribute to the substrate site. Residue D213 participates in ATP binding. The segment at 236-261 (RQTNGCLNGYTPSRKRQASESSSRPH) is disordered. Phosphoserine is present on S254.

Belongs to the uridine kinase family. As to quaternary structure, homotetramer. According to PubMed:8812458; testis-specific. According to PubMed:11306702, placenta-specific.

It carries out the reaction uridine + ATP = UMP + ADP + H(+). The catalysed reaction is cytidine + ATP = CMP + ADP + H(+). Its pathway is pyrimidine metabolism; CTP biosynthesis via salvage pathway; CTP from cytidine: step 1/3. It functions in the pathway pyrimidine metabolism; UMP biosynthesis via salvage pathway; UMP from uridine: step 1/1. Phosphorylates uridine and cytidine to uridine monophosphate and cytidine monophosphate. Does not phosphorylate deoxyribonucleosides or purine ribonucleosides. Can use ATP or GTP as a phosphate donor. Can also phosphorylate cytidine and uridine nucleoside analogs such as 6-azauridine, 5-fluorouridine, 4-thiouridine, 5-bromouridine, N(4)-acetylcytidine, N(4)-benzoylcytidine, 5-fluorocytidine, 2-thiocytidine, 5-methylcytidine, and N(4)-anisoylcytidine. This chain is Uridine-cytidine kinase 2 (UCK2), found in Homo sapiens (Human).